We begin with the raw amino-acid sequence, 172 residues long: Adenine phosphoribosyltransferase (172 aa).

Belongs to the purine/pyrimidine phosphoribosyltransferase family. In terms of assembly, homodimer.

Its subcellular location is the cytoplasm. The catalysed reaction is AMP + diphosphate = 5-phospho-alpha-D-ribose 1-diphosphate + adenine. It participates in purine metabolism; AMP biosynthesis via salvage pathway; AMP from adenine: step 1/1. Catalyzes a salvage reaction resulting in the formation of AMP, that is energically less costly than de novo synthesis. This chain is Adenine phosphoribosyltransferase, found in Methanococcus maripaludis (strain DSM 14266 / JCM 13030 / NBRC 101832 / S2 / LL).